The sequence spans 2311 residues: Protein Ycf2 (2311 aa).

Residue G1652 to S1659 coordinates ATP.

Belongs to the Ycf2 family.

Its subcellular location is the plastid. The protein resides in the chloroplast stroma. Its function is as follows. Probable ATPase of unknown function. Its presence in a non-photosynthetic plant (Epifagus virginiana) and experiments in tobacco indicate that it has an essential function which is probably not related to photosynthesis. This chain is Protein Ycf2, found in Lemna minor (Common duckweed).